Reading from the N-terminus, the 211-residue chain is Octanoyltransferase (211 aa).

A BPL/LPL catalytic domain is found at Gly-28–Leu-203. Substrate-binding positions include Arg-66–His-73, Ser-133–Gly-135, and Gly-146–Ala-148. The active-site Acyl-thioester intermediate is Cys-164.

This sequence belongs to the LipB family.

It is found in the cytoplasm. The catalysed reaction is octanoyl-[ACP] + L-lysyl-[protein] = N(6)-octanoyl-L-lysyl-[protein] + holo-[ACP] + H(+). Its pathway is protein modification; protein lipoylation via endogenous pathway; protein N(6)-(lipoyl)lysine from octanoyl-[acyl-carrier-protein]: step 1/2. Catalyzes the transfer of endogenously produced octanoic acid from octanoyl-acyl-carrier-protein onto the lipoyl domains of lipoate-dependent enzymes. Lipoyl-ACP can also act as a substrate although octanoyl-ACP is likely to be the physiological substrate. The chain is Octanoyltransferase from Syntrophotalea carbinolica (strain DSM 2380 / NBRC 103641 / GraBd1) (Pelobacter carbinolicus).